The chain runs to 870 residues: Leucine--tRNA ligase (870 aa).

Residues 42–52 (PYPSGKLHMGH) carry the 'HIGH' region motif. A 'KMSKS' region motif is present at residues 629-633 (KMSKS). Lys632 is an ATP binding site.

The protein belongs to the class-I aminoacyl-tRNA synthetase family.

It is found in the cytoplasm. The enzyme catalyses tRNA(Leu) + L-leucine + ATP = L-leucyl-tRNA(Leu) + AMP + diphosphate. The polypeptide is Leucine--tRNA ligase (Dechloromonas aromatica (strain RCB)).